A 463-amino-acid chain; its full sequence is Nuclear hormone receptor family member nhr-3 (463 aa).

A DNA-binding region (nuclear receptor) is located at residues 50 to 125 (STICSVCCDE…VGMEPDAIRP (76 aa)). 2 consecutive NR C4-type zinc fingers follow at residues 53 to 73 (CSVC…CFGC) and 89 to 113 (CRYS…FQKC). Basic and acidic residues predominate over residues 121–131 (DAIRPDRDKTG). A disordered region spans residues 121–143 (DAIRPDRDKTGRQKNPRRNTEGS). One can recognise an NR LBD domain in the interval 199–462 (EIENIVIQLQ…VLEELLFLDR (264 aa)).

Belongs to the nuclear hormone receptor family.

It localises to the nucleus. Its function is as follows. Orphan nuclear receptor. The protein is Nuclear hormone receptor family member nhr-3 (nhr-3) of Caenorhabditis elegans.